Here is a 522-residue protein sequence, read N- to C-terminus: Putative malate dehydrogenase 1B (522 aa).

The segment at E495–S522 is disordered.

The protein belongs to the LDH/MDH superfamily. MDH type 2 family.

In Branchiostoma floridae (Florida lancelet), this protein is Putative malate dehydrogenase 1B (MDH1B).